The following is a 98-amino-acid chain: Large ribosomal subunit protein uL23 (98 aa).

This sequence belongs to the universal ribosomal protein uL23 family. As to quaternary structure, part of the 50S ribosomal subunit. Contacts protein L29, and trigger factor when it is bound to the ribosome.

Functionally, one of the early assembly proteins it binds 23S rRNA. One of the proteins that surrounds the polypeptide exit tunnel on the outside of the ribosome. Forms the main docking site for trigger factor binding to the ribosome. This is Large ribosomal subunit protein uL23 from Rickettsia akari (strain Hartford).